The chain runs to 348 residues: MRQPWWKDFTIPDASAIIHQNITIVSIVGEIEVPVSTIDAYERDRLLTGMTLSAQLALGVLTILMVCLLSSSEKRKHPVFVFNSASIVAMCLRAILNIVTICSNSYSILVNYGFILNMVHMYVHVFNILILLLAPVIIFTAEMSMMIQVRIICAHDRKTQRIMTVISACLTVLVLAFWITNMCQQIQYLLWLTPLSSKTIVGYSWPYFIAKILFAFSIIFHSGVFSYKLFRAILIRKKIGQFPFGPMQCILVISCQCLIVPATFTIIDSFIHTYDGFSSMTQCLLIISLPLSSLWASSTALKLQSMKTSSAQGETTEVSIRVDRTFDIKHTPSDDYSISDESETKKWT.

Helical transmembrane passes span Leu-46–Leu-69, Val-79–Ser-103, Val-125–Ala-141, Ile-162–Thr-180, Tyr-207–Phe-225, Cys-249–Ile-267, and Cys-283–Leu-301.

Belongs to the G-protein coupled receptor 4 family.

The protein resides in the membrane. In terms of biological role, receptor for the peptide pheromone P-factor, a mating factor of S.pombe. Pheromone signaling is essential for initiation of meiosis in S.pombe; P-factor signaling alone may be sufficient. The polypeptide is Pheromone P-factor receptor (mam2) (Schizosaccharomyces pombe (strain 972 / ATCC 24843) (Fission yeast)).